We begin with the raw amino-acid sequence, 343 residues long: Tetraacyldisaccharide 4'-kinase (343 aa).

Position 61-68 (61-68) interacts with ATP; that stretch reads GVGGNGKT.

The protein belongs to the LpxK family.

The enzyme catalyses a lipid A disaccharide + ATP = a lipid IVA + ADP + H(+). Its pathway is glycolipid biosynthesis; lipid IV(A) biosynthesis; lipid IV(A) from (3R)-3-hydroxytetradecanoyl-[acyl-carrier-protein] and UDP-N-acetyl-alpha-D-glucosamine: step 6/6. Its function is as follows. Transfers the gamma-phosphate of ATP to the 4'-position of a tetraacyldisaccharide 1-phosphate intermediate (termed DS-1-P) to form tetraacyldisaccharide 1,4'-bis-phosphate (lipid IVA). The protein is Tetraacyldisaccharide 4'-kinase of Colwellia psychrerythraea (strain 34H / ATCC BAA-681) (Vibrio psychroerythus).